A 546-amino-acid chain; its full sequence is DNA replication factor Cdt1 (546 aa).

Positions 1-11 (MEQRRVTDFFA) are enriched in basic and acidic residues. A PIP-box K+4 motif motif is present at residues 1-23 (MEQRRVTDFFARRRPGPPRIAPP). 2 disordered regions span residues 1-118 (MEQR…QDQD) and 143-165 (SAQDAGESCTPEAEGRPEEPCGE). Residues 28 to 45 (RTPSPARPALRAPASATS) are compositionally biased toward low complexity. Threonine 29 is subject to Phosphothreonine; by MAPK8. The residue at position 31 (serine 31) is a Phosphoserine. Residues 68–70 (RRL) carry the Cyclin-binding motif motif. The residue at position 93 (serine 93) is a Phosphoserine; by MAPK8. The interval 150-190 (SCTPEAEGRPEEPCGEKAPAYQRFHALAQPGLPGLVLPYKY) is interaction with GMNN. A compositionally biased stretch (basic and acidic residues) spans 155–164 (AEGRPEEPCG). Serine 318 is subject to Phosphoserine; by MAPK8. 2 positions are modified to phosphoserine: serine 380 and serine 394. A disordered region spans residues 383–415 (ALRSAAPSSPGSPRPALPATPPATPPAASPSAL). The span at 392-410 (PGSPRPALPATPPATPPAA) shows a compositional bias: pro residues. Residues 451–546 (LERLPELARV…AHQTRAEEGL (96 aa)) form an interaction with LRWD1 region.

The protein belongs to the Cdt1 family. As to quaternary structure, interacts with GMNN; the interaction inhibits binding of the MCM complex to origins of replication. Interacts with MCM6. Interacts with CDC6; are mutually dependent on one another for loading MCM complexes onto chromatin. Interacts with PCNA. Interacts with LRWD1 during G1 phase and during mitosis. Interacts with NDC80 subunit of the NDC80 complex; leading to kinetochore localization. Interacts with GRWD1; origin binding of GRWD1 is dependent on CDT1. Interacts with KAT7. Interacts with ubiquitin-binding protein FAF1; the interaction is likely to promote CDT1 degradation. In terms of processing, two independent E3 ubiquitin ligase complexes, SCF(SKP2) and the DCX(DTL) complex, mediated CDT1 degradation in S phase. Ubiquitinated by the DCX(DTL) complex, in response to DNA damage, leading to its degradation. Ubiquitination by the DCX(DTL) complex is necessary to ensure proper cell cycle regulation and is PCNA-dependent: interacts with PCNA via its PIP-box, while the presence of the containing the 'K+4' motif in the PIP box, recruit the DCX(DTL) complex, leading to its degradation. Phosphorylation at Thr-29 by CDK2 targets CDT1 for ubiquitination by SCF(SKP2) E3 ubiquitin ligase and subsequent degradation. The interaction with GMNN protects it against ubiquitination. Deubiquitinated by USP37. Ubiquitinated and degraded by the SCF(FBXO31) complex during the G2 phase to prevent re-replication. Post-translationally, phosphorylation by cyclin A-dependent kinases at Thr-29 targets CDT1 for ubiquitynation by SCF(SKP2) E3 ubiquitin ligase and subsequent degradation. Phosphorylated at Thr-29 by MAPK8/JNK1, which blocks replication licensing in response to stress. Binding to GMNN is not affected by phosphorylation.

The protein localises to the nucleus. It localises to the chromosome. It is found in the centromere. Its subcellular location is the kinetochore. Functionally, required for both DNA replication and mitosis. DNA replication licensing factor, required for pre-replication complex assembly. Cooperates with CDC6 and the origin recognition complex (ORC) during G1 phase of the cell cycle to promote the loading of the mini-chromosome maintenance (MCM) complex onto DNA to generate pre-replication complexes (pre-RC). Required also for mitosis by promoting stable kinetochore-microtubule attachments. Potential oncogene. This Homo sapiens (Human) protein is DNA replication factor Cdt1.